The chain runs to 232 residues: Phosphatidylserine decarboxylase proenzyme (232 aa).

Ser-190 serves as the catalytic Schiff-base intermediate with substrate; via pyruvic acid. A Pyruvic acid (Ser); by autocatalysis modification is found at Ser-190.

The protein belongs to the phosphatidylserine decarboxylase family. PSD-A subfamily. Heterodimer of a large membrane-associated beta subunit and a small pyruvoyl-containing alpha subunit. Pyruvate is required as a cofactor. In terms of processing, is synthesized initially as an inactive proenzyme. Formation of the active enzyme involves a self-maturation process in which the active site pyruvoyl group is generated from an internal serine residue via an autocatalytic post-translational modification. Two non-identical subunits are generated from the proenzyme in this reaction, and the pyruvate is formed at the N-terminus of the alpha chain, which is derived from the carboxyl end of the proenzyme. The post-translation cleavage follows an unusual pathway, termed non-hydrolytic serinolysis, in which the side chain hydroxyl group of the serine supplies its oxygen atom to form the C-terminus of the beta chain, while the remainder of the serine residue undergoes an oxidative deamination to produce ammonia and the pyruvoyl prosthetic group on the alpha chain.

It localises to the cell membrane. It catalyses the reaction a 1,2-diacyl-sn-glycero-3-phospho-L-serine + H(+) = a 1,2-diacyl-sn-glycero-3-phosphoethanolamine + CO2. It functions in the pathway phospholipid metabolism; phosphatidylethanolamine biosynthesis; phosphatidylethanolamine from CDP-diacylglycerol: step 2/2. In terms of biological role, catalyzes the formation of phosphatidylethanolamine (PtdEtn) from phosphatidylserine (PtdSer). The chain is Phosphatidylserine decarboxylase proenzyme from Bradyrhizobium sp. (strain BTAi1 / ATCC BAA-1182).